Consider the following 295-residue polypeptide: Sulfotransferase 1A1 (295 aa).

Position 48–53 (48–53 (KSGTTW)) interacts with 3'-phosphoadenylyl sulfate. 106–108 (KTH) contributes to the substrate binding site. The Proton acceptor role is filled by H108. 3'-phosphoadenylyl sulfate contacts are provided by residues R130, S138, Y193, 227 to 232 (TSFKEM), and 255 to 259 (FMRKG). Residue S138 is modified to Phosphoserine.

Belongs to the sulfotransferase 1 family. In terms of assembly, homodimer.

It is found in the cytoplasm. It catalyses the reaction a phenol + 3'-phosphoadenylyl sulfate = an aryl sulfate + adenosine 3',5'-bisphosphate + H(+). The enzyme catalyses 17beta-estradiol + 3'-phosphoadenylyl sulfate = 17beta-estradiol 3-sulfate + adenosine 3',5'-bisphosphate + H(+). The catalysed reaction is 4-ethylphenol + 3'-phosphoadenylyl sulfate = 4-ethylphenyl sulfate + adenosine 3',5'-bisphosphate + H(+). It carries out the reaction 4-nitrophenol + 3'-phosphoadenylyl sulfate = 4-nitrophenyl sulfate + adenosine 3',5'-bisphosphate. It catalyses the reaction dopamine + 3'-phosphoadenylyl sulfate = dopamine 3-O-sulfate + adenosine 3',5'-bisphosphate + H(+). The enzyme catalyses dopamine + 3'-phosphoadenylyl sulfate = dopamine 4-O-sulfate + adenosine 3',5'-bisphosphate + H(+). The catalysed reaction is 3,3',5-triiodo-L-thyronine + 3'-phosphoadenylyl sulfate = 3,3',5-triiodo-L-thyronine sulfate + adenosine 3',5'-bisphosphate + H(+). It carries out the reaction 3,3',5'-triiodo-L-thyronine + 3'-phosphoadenylyl sulfate = 3,3',5'-triiodo-L-thyronine sulfate + adenosine 3',5'-bisphosphate + H(+). It catalyses the reaction 3,3'-diiodo-L-thyronine + 3'-phosphoadenylyl sulfate = 3,3'-diiodo-L-thyronine sulfate + adenosine 3',5'-bisphosphate + H(+). The enzyme catalyses L-thyroxine + 3'-phosphoadenylyl sulfate = L-thyroxine sulfate + adenosine 3',5'-bisphosphate + H(+). In terms of biological role, sulfotransferase that utilizes 3'-phospho-5'-adenylyl sulfate (PAPS) as sulfonate donor to catalyze the sulfate conjugation of a wide variety of acceptor molecules bearing a hydroxyl or an amine group. Sulfonation increases the water solubility of most compounds, and therefore their renal excretion, but it can also result in bioactivation to form active metabolites. Displays broad substrate specificity for small phenolic compounds. Plays an important role in the sulfonation of endogenous molecules such as steroid hormones. Mediates also the metabolic activation of carcinogenic N-hydroxyarylamines leading to highly reactive intermediates capable of forming DNA adducts, potentially resulting in mutagenesis. May play a role in gut microbiota-host metabolic interaction. O-sulfonates 4-ethylphenol (4-EP), a dietary tyrosine-derived metabolite produced by gut bacteria. The product 4-EPS crosses the blood-brain barrier and may negatively regulate oligodendrocyte maturation and myelination, affecting the functional connectivity of different brain regions associated with the limbic system. Catalyzes the sulfate conjugation of dopamine. Catalyzes the sulfation of T4 (L-thyroxine/3,5,3',5'-tetraiodothyronine), T3 (3,5,3'-triiodothyronine), rT3 (3,3',5'-triiodothyronine) and 3,3'-T2 (3,3'-diiodothyronine), with a substrate preference of 3,3'-T2 &gt; rT3 &gt; T3 &gt; T4. In Macaca fascicularis (Crab-eating macaque), this protein is Sulfotransferase 1A1 (SULT1A1).